We begin with the raw amino-acid sequence, 291 residues long: Nucleotide-binding protein Cthe_0113 (291 aa).

8 to 15 contributes to the ATP binding site; that stretch reads GISGAGKS. 59–62 serves as a coordination point for GTP; the sequence is DIRG.

It belongs to the RapZ-like family.

Displays ATPase and GTPase activities. The sequence is that of Nucleotide-binding protein Cthe_0113 from Acetivibrio thermocellus (strain ATCC 27405 / DSM 1237 / JCM 9322 / NBRC 103400 / NCIMB 10682 / NRRL B-4536 / VPI 7372) (Clostridium thermocellum).